The following is a 445-amino-acid chain: 26S proteasome regulatory subunit RPN5 (445 aa).

Ser-2 carries the post-translational modification N-acetylserine. Residues 233-407 (EYLEVAQYLQ…KIVNFEKPKN (175 aa)) enclose the PCI domain.

This sequence belongs to the proteasome subunit p55 family. In terms of processing, N-acetylated by NAT1.

Acts as a regulatory subunit of the 26S proteasome which is involved in the ATP-dependent degradation of ubiquitinated proteins. This is 26S proteasome regulatory subunit RPN5 (RPN5) from Saccharomyces cerevisiae (strain ATCC 204508 / S288c) (Baker's yeast).